We begin with the raw amino-acid sequence, 187 residues long: Adenine phosphoribosyltransferase (187 aa).

The protein belongs to the purine/pyrimidine phosphoribosyltransferase family. In terms of assembly, homodimer.

The protein resides in the cytoplasm. It carries out the reaction AMP + diphosphate = 5-phospho-alpha-D-ribose 1-diphosphate + adenine. It participates in purine metabolism; AMP biosynthesis via salvage pathway; AMP from adenine: step 1/1. Catalyzes a salvage reaction resulting in the formation of AMP, that is energically less costly than de novo synthesis. This is Adenine phosphoribosyltransferase from Yersinia pestis (strain Pestoides F).